The following is a 273-amino-acid chain: 1,4-dihydroxy-2-naphthoyl-CoA synthase (273 aa).

Substrate contacts are provided by residues Arg34, 73 to 77 (SGGDQ), Tyr85, 117 to 121 (YAVGG), Thr143, Ser149, Tyr246, and Lys261. 142-144 (QTG) is a binding site for hydrogencarbonate. A compositionally biased stretch (basic and acidic residues) spans 254 to 265 (GRDAFKEKRDPD). The interval 254 to 273 (GRDAFKEKRDPDFDQFPKFP) is disordered.

This sequence belongs to the enoyl-CoA hydratase/isomerase family. MenB subfamily. Hydrogencarbonate serves as cofactor.

It catalyses the reaction 2-succinylbenzoyl-CoA + H(+) = 1,4-dihydroxy-2-naphthoyl-CoA + H2O. It participates in quinol/quinone metabolism; 1,4-dihydroxy-2-naphthoate biosynthesis; 1,4-dihydroxy-2-naphthoate from chorismate: step 6/7. Its pathway is quinol/quinone metabolism; menaquinone biosynthesis. Its function is as follows. Converts o-succinylbenzoyl-CoA (OSB-CoA) to 1,4-dihydroxy-2-naphthoyl-CoA (DHNA-CoA). This Staphylococcus aureus (strain Mu50 / ATCC 700699) protein is 1,4-dihydroxy-2-naphthoyl-CoA synthase.